Reading from the N-terminus, the 630-residue chain is 1-deoxy-D-xylulose-5-phosphate synthase (630 aa).

Residues H87 and 128–130 (GHS) contribute to the thiamine diphosphate site. D159 serves as a coordination point for Mg(2+). Thiamine diphosphate-binding positions include 160-161 (GA), N188, F295, and E377. Position 188 (N188) interacts with Mg(2+).

Belongs to the transketolase family. DXPS subfamily. In terms of assembly, homodimer. Requires Mg(2+) as cofactor. The cofactor is thiamine diphosphate.

It carries out the reaction D-glyceraldehyde 3-phosphate + pyruvate + H(+) = 1-deoxy-D-xylulose 5-phosphate + CO2. Its pathway is metabolic intermediate biosynthesis; 1-deoxy-D-xylulose 5-phosphate biosynthesis; 1-deoxy-D-xylulose 5-phosphate from D-glyceraldehyde 3-phosphate and pyruvate: step 1/1. Catalyzes the acyloin condensation reaction between C atoms 2 and 3 of pyruvate and glyceraldehyde 3-phosphate to yield 1-deoxy-D-xylulose-5-phosphate (DXP). In Pseudomonas savastanoi pv. phaseolicola (strain 1448A / Race 6) (Pseudomonas syringae pv. phaseolicola (strain 1448A / Race 6)), this protein is 1-deoxy-D-xylulose-5-phosphate synthase.